The primary structure comprises 286 residues: Nucleotide-binding protein VC0395_A2112/VC395_2645 (286 aa).

8–15 (GQSGAGKS) contributes to the ATP binding site. 56 to 59 (DIRN) serves as a coordination point for GTP.

This sequence belongs to the RapZ-like family.

In terms of biological role, displays ATPase and GTPase activities. This chain is Nucleotide-binding protein VC0395_A2112/VC395_2645, found in Vibrio cholerae serotype O1 (strain ATCC 39541 / Classical Ogawa 395 / O395).